A 338-amino-acid polypeptide reads, in one-letter code: Biotin synthase (338 aa).

The Radical SAM core domain occupies 46 to 270 (NEVQLSTLLS…VAVARITMPA (225 aa)). [4Fe-4S] cluster contacts are provided by Cys61, Cys65, and Cys68. The [2Fe-2S] cluster site is built by Cys105, Cys136, Cys196, and Arg274.

The protein belongs to the radical SAM superfamily. Biotin synthase family. In terms of assembly, homodimer. It depends on [4Fe-4S] cluster as a cofactor. Requires [2Fe-2S] cluster as cofactor.

It catalyses the reaction (4R,5S)-dethiobiotin + (sulfur carrier)-SH + 2 reduced [2Fe-2S]-[ferredoxin] + 2 S-adenosyl-L-methionine = (sulfur carrier)-H + biotin + 2 5'-deoxyadenosine + 2 L-methionine + 2 oxidized [2Fe-2S]-[ferredoxin]. Its pathway is cofactor biosynthesis; biotin biosynthesis; biotin from 7,8-diaminononanoate: step 2/2. Functionally, catalyzes the conversion of dethiobiotin (DTB) to biotin by the insertion of a sulfur atom into dethiobiotin via a radical-based mechanism. The protein is Biotin synthase of Rhizorhabdus wittichii (strain DSM 6014 / CCUG 31198 / JCM 15750 / NBRC 105917 / EY 4224 / RW1) (Sphingomonas wittichii).